The following is a 106-amino-acid chain: MTDPWRYATHGVMVAVRVTPRGGRDAVDGIEMLANGKSVVKVRVRVAAEGGEANRAVTELFAGLLRVPKSKVKVASGVTSRIKQIAIEGDPKQLGEALKAATSIES.

The protein belongs to the UPF0235 family.

This is UPF0235 protein OCAR_4310/OCA5_c02140 from Afipia carboxidovorans (strain ATCC 49405 / DSM 1227 / KCTC 32145 / OM5) (Oligotropha carboxidovorans).